An 860-amino-acid polypeptide reads, in one-letter code: Protein argonaute-2 (860 aa).

3'-nitrotyrosine is present on tyrosine 2. The PAZ domain maps to 230-349; sequence PVIEFVCEVL…LPLEVCNIVA (120 aa). An interaction with guide RNA region spans residues 312–317; that stretch reads YFKDRH. A Phosphoserine modification is found at serine 388. The 302-residue stretch at 518 to 819 folds into the Piwi domain; it reads LVVVILPGKT…VAFRARYHLV (302 aa). Positions 525 to 567 are interaction with guide RNA; the sequence is GKTPVYAEVKRVGDTVLGMATQCVQMKNVQRTTPQTLSNLCLK. The segment at 588-591 is interaction with GW182 family members; the sequence is FQQP. Position 598 (aspartate 598) interacts with a divalent metal cation. Residues 651 to 661 are interaction with GW182 family members; the sequence is LIQFYKSTRFK. Aspartate 670 contacts a divalent metal cation. A 4-hydroxyproline modification is found at proline 701. Interaction with guide RNA regions lie at residues 710–711, 754–762, and 791–813; these read KR, HAGIQGTSR, and YVRCTRSVSIPAPAYYAHLVAFR. Histidine 808 lines the a divalent metal cation pocket. Serine 825, serine 829, serine 832, and serine 835 each carry phosphoserine.

Belongs to the argonaute family. Ago subfamily. As to quaternary structure, interacts with DICER1 through its Piwi domain and with TARBP2 during assembly of the RNA-induced silencing complex (RISC). Together, DICER1, AGO2 and TARBP2 constitute the trimeric RISC loading complex (RLC), or micro-RNA (miRNA) loading complex (miRLC). Within the RLC/miRLC, DICER1 and TARBP2 are required to process precursor miRNAs (pre-miRNAs) to mature miRNAs and then load them onto AGO2. AGO2 bound to the mature miRNA constitutes the minimal RISC and may subsequently dissociate from DICER1 and TARBP2. Note however that the term RISC has also been used to describe the trimeric RLC/miRLC. The formation of RISC complexes containing siRNAs rather than miRNAs appears to occur independently of DICER1. Interacts with AGO1. Also interacts with DDB1, DDX5, DDX6, DDX20, DHX30, DHX36, DDX47, DHX9, ELAVL, FXR1, GEMIN4, HNRNPF, IGF2BP1, ILF3, IMP8, MATR3, PABPC1, PRMT5, P4HA1, P4HB, RBM4, SART3, TNRC6A, TNRC6B, UPF1 and YBX1. Interacts with the P-body components DCP1A and XRN1. Associates with polysomes and messenger ribonucleoproteins (mNRPs). Interacts with RBM4; the interaction is modulated under stress-induced conditions, occurs under both cell proliferation and differentiation conditions and in an RNA- and phosphorylation-independent manner. Interacts with LIMD1, WTIP and AJUBA. Interacts with TRIM71; the interaction increases in presence of RNA. Interacts with APOBEC3G in an RNA-dependent manner. Interacts with APOBEC3A, APOBEC3C, APOBEC3F and APOBEC3H. Interacts with DICER1, TARBP2, EIF6, MOV10 and RPL7A (60S ribosome subunit); they form a large RNA-induced silencing complex (RISC). Interacts with FMR1. Interacts with ZFP36. Interacts with RC3H1; the interaction is RNA independent. Found in a complex, composed of AGO2, CHD7 and ARB2A. Interacts with SND1 and SYT11. Interacts with CLNK. Interacts with GARRE1. Interacts with GRB2; this interaction is important for the formation of a ternary complex containing GRB2, AGO2 and DICER1. It depends on Mg(2+) as a cofactor. Requires Mn(2+) as cofactor. In terms of processing, hydroxylated. 4-hydroxylation appears to enhance protein stability but is not required for miRNA-binding or endonuclease activity. Post-translationally, ubiquitinated on surface-exposed lysines by a SCF-like E3 ubiquitin-protein ligase complex containing ZSWIM8 during target-directed microRNA degradation (TDMD), a process that mediates degradation of microRNAs (miRNAs). Ubiquitination by the SCF-like E3 ubiquitin-protein ligase complex containing ZSWIM8 leads to its subsequent degradation, thereby exposing miRNAs for degradation. ZSWIM8 recognizes and binds AGO2 when it is engaged with a TDMD target. Phosphorylation at Ser-388 by AKT3; leads to up-regulate translational repression of microRNA target and down-regulate endonucleolytic cleavage. In terms of processing, a phosphorylation cycle of C-terminal serine cluster (Ser-825-Ser-835) regulates the release of target mRNAs. Target-binding leads to phosphorylation of these residues by CSNK1A1, which reduces the affinity of AGO2 for mRNA and enables target release. The ANKRD52-PPP6C phosphatase complex dephosphorylates the residues, which primes AGO2 for binding a new target.

It localises to the cytoplasm. The protein localises to the P-body. Its subcellular location is the nucleus. The enzyme catalyses Endonucleolytic cleavage to 5'-phosphomonoester.. In terms of biological role, required for RNA-mediated gene silencing (RNAi) by the RNA-induced silencing complex (RISC). The 'minimal RISC' appears to include AGO2 bound to a short guide RNA such as a microRNA (miRNA) or short interfering RNA (siRNA). These guide RNAs direct RISC to complementary mRNAs that are targets for RISC-mediated gene silencing. The precise mechanism of gene silencing depends on the degree of complementarity between the miRNA or siRNA and its target. Binding of RISC to a perfectly complementary mRNA generally results in silencing due to endonucleolytic cleavage of the mRNA specifically by AGO2. Binding of RISC to a partially complementary mRNA results in silencing through inhibition of translation, and this is independent of endonuclease activity. May inhibit translation initiation by binding to the 7-methylguanosine cap, thereby preventing the recruitment of the translation initiation factor eIF4-E. May also inhibit translation initiation via interaction with EIF6, which itself binds to the 60S ribosomal subunit and prevents its association with the 40S ribosomal subunit. The inhibition of translational initiation leads to the accumulation of the affected mRNA in cytoplasmic processing bodies (P-bodies), where mRNA degradation may subsequently occur. In some cases RISC-mediated translational repression is also observed for miRNAs that perfectly match the 3' untranslated region (3'-UTR). Can also up-regulate the translation of specific mRNAs under certain growth conditions. Binds to the AU element of the 3'-UTR of the TNF (TNF-alpha) mRNA and up-regulates translation under conditions of serum starvation. Also required for transcriptional gene silencing (TGS), in which short RNAs known as antigene RNAs or agRNAs direct the transcriptional repression of complementary promoter regions. This is Protein argonaute-2 (Ago2) from Rattus norvegicus (Rat).